We begin with the raw amino-acid sequence, 109 residues long: Short-chain dehydrogenase/reductase homolog YusS (109 aa).

The protein belongs to the short-chain dehydrogenases/reductases (SDR) family.

In Bacillus subtilis (strain 168), this protein is Short-chain dehydrogenase/reductase homolog YusS (yusS).